The primary structure comprises 413 residues: Alpha-1-antitrypsin 1-5 (413 aa).

The first 24 residues, 1-24 (MTPSISWCLLLLAGLCCLVPSFLA), serve as a signal peptide directing secretion. N-linked (GlcNAc...) asparagine glycans are attached at residues Asn-64, Asn-101, and Asn-265. Residues 368–387 (AATVLQGGFLSMPPILHFNR) form an RCL region.

The protein belongs to the serpin family.

The protein localises to the secreted. In terms of biological role, does not inhibit elastase or chymotrypsin. No target protease has been identified to date. The sequence is that of Alpha-1-antitrypsin 1-5 (Serpina1e) from Mus musculus (Mouse).